A 282-amino-acid chain; its full sequence is HTH-type transcriptional activator RhaR (282 aa).

Residues 179–277 (DKLITALANS…GMTPSQWRHL (99 aa)) enclose the HTH araC/xylS-type domain. DNA-binding regions (H-T-H motif) lie at residues 196 to 217 (DAFC…RAQT) and 244 to 267 (ISEI…TRET).

Binds DNA as a dimer.

It is found in the cytoplasm. In terms of biological role, activates expression of the rhaSR operon in response to L-rhamnose. The sequence is that of HTH-type transcriptional activator RhaR from Salmonella dublin (strain CT_02021853).